Here is a 113-residue protein sequence, read N- to C-terminus: MSDINLPLSFSDAAATRVKMLIAEEENPALKLRVYITGGGCSGFQYGFTFDESVNEGDTTIENSGVTLVVDPMSLQYLIGGVVDYTEGLEGSRFFVNNPNATTTCGCGASFSV.

Iron-sulfur cluster contacts are provided by C41, C105, and C107.

This sequence belongs to the HesB/IscA family. Homodimer. It depends on iron-sulfur cluster as a cofactor.

Functionally, required for insertion of 4Fe-4S clusters for at least IspG. The polypeptide is Iron-sulfur cluster insertion protein ErpA (Vibrio vulnificus (strain YJ016)).